A 102-amino-acid polypeptide reads, in one-letter code: ATP-dependent Clp protease adapter protein ClpS (102 aa).

Belongs to the ClpS family. In terms of assembly, binds to the N-terminal domain of the chaperone ClpA.

Functionally, involved in the modulation of the specificity of the ClpAP-mediated ATP-dependent protein degradation. The protein is ATP-dependent Clp protease adapter protein ClpS of Shewanella baltica (strain OS155 / ATCC BAA-1091).